The sequence spans 197 residues: Probable nicotinate-nucleotide adenylyltransferase (197 aa).

The protein belongs to the NadD family.

The catalysed reaction is nicotinate beta-D-ribonucleotide + ATP + H(+) = deamido-NAD(+) + diphosphate. It functions in the pathway cofactor biosynthesis; NAD(+) biosynthesis; deamido-NAD(+) from nicotinate D-ribonucleotide: step 1/1. Functionally, catalyzes the reversible adenylation of nicotinate mononucleotide (NaMN) to nicotinic acid adenine dinucleotide (NaAD). This chain is Probable nicotinate-nucleotide adenylyltransferase, found in Borrelia garinii subsp. bavariensis (strain ATCC BAA-2496 / DSM 23469 / PBi) (Borreliella bavariensis).